The primary structure comprises 178 residues: Mediator of RNA polymerase II transcription subunit 30 (178 aa).

Residues 1-22 form a disordered region; that stretch reads MSTPPLAASGMAPGPFAGPQAQ. S2 is modified (N-acetylserine). The span at 10 to 22 shows a compositional bias: low complexity; sequence GMAPGPFAGPQAQ. 2 coiled-coil regions span residues 70-94 and 133-173; these read TYQDRLTKLQDNLRQLSVLFRKLRL and RFAS…INAM.

This sequence belongs to the Mediator complex subunit 30 family. In terms of assembly, component of the Mediator complex, which is composed of MED1, MED4, MED6, MED7, MED8, MED9, MED10, MED11, MED12, MED13, MED13L, MED14, MED15, MED16, MED17, MED18, MED19, MED20, MED21, MED22, MED23, MED24, MED25, MED26, MED27, MED29, MED30, MED31, CCNC, CDK8 and CDC2L6/CDK11. The MED12, MED13, CCNC and CDK8 subunits form a distinct module termed the CDK8 module. Mediator containing the CDK8 module is less active than Mediator lacking this module in supporting transcriptional activation. Individual preparations of the Mediator complex lacking one or more distinct subunits have been variously termed ARC, CRSP, DRIP, PC2, SMCC and TRAP. Expressed in brain, heart, kidney, liver, lung, pancreas, placenta and skeletal muscle.

The protein localises to the nucleus. Component of the Mediator complex, a coactivator involved in the regulated transcription of nearly all RNA polymerase II-dependent genes. Mediator functions as a bridge to convey information from gene-specific regulatory proteins to the basal RNA polymerase II transcription machinery. Mediator is recruited to promoters by direct interactions with regulatory proteins and serves as a scaffold for the assembly of a functional preinitiation complex with RNA polymerase II and the general transcription factors. The chain is Mediator of RNA polymerase II transcription subunit 30 (MED30) from Homo sapiens (Human).